Reading from the N-terminus, the 509-residue chain is GMP synthase [glutamine-hydrolyzing] (509 aa).

A Glutamine amidotransferase type-1 domain is found at 4–194 (LVLVVDFGGQ…LYNICGLENS (191 aa)). The active-site Nucleophile is Cys81. Catalysis depends on residues His168 and Glu170. The GMPS ATP-PPase domain maps to 195 to 384 (WSMASFAEEK…LGIPHHLVWR (190 aa)). 222 to 228 (SGGVDSS) contributes to the ATP binding site.

Homodimer.

It catalyses the reaction XMP + L-glutamine + ATP + H2O = GMP + L-glutamate + AMP + diphosphate + 2 H(+). It functions in the pathway purine metabolism; GMP biosynthesis; GMP from XMP (L-Gln route): step 1/1. In terms of biological role, catalyzes the synthesis of GMP from XMP. This is GMP synthase [glutamine-hydrolyzing] from Clostridium perfringens (strain 13 / Type A).